Reading from the N-terminus, the 566-residue chain is Bicarbonate transporter BicA (566 aa).

Residues M1 to D15 are Cytoplasmic-facing. A helical transmembrane segment spans residues I16 to A36. Residues S37–E42 are Periplasmic-facing. Residues A43 to T63 form a helical membrane-spanning segment. A topological domain (cytoplasmic) is located at residue L64. A helical membrane pass occupies residues I65–A85. T69 is a binding site for hydrogencarbonate. At S86–G93 the chain is on the periplasmic side. Residues L94 to L114 form a helical membrane-spanning segment. At K115–T126 the chain is on the cytoplasmic side. The helical transmembrane segment at V127–F147 threads the bilayer. Residues L148–S169 lie on the Periplasmic side of the membrane. A helical membrane pass occupies residues N170–P190. The Cytoplasmic segment spans residues E191–V196. A helical transmembrane segment spans residues I197–P217. The Periplasmic segment spans residues E218–R247. The chain crosses the membrane as a helical span at residues M248–V268. D262, T266, and G304 together coordinate Na(+). The Cytoplasmic segment spans residues V269–R318. Residue A305 coordinates hydrogencarbonate. Residue T306 participates in Na(+) binding. Residues T319–S339 form a helical membrane-spanning segment. Position 340 (L340) is a topological domain, periplasmic. A helical membrane pass occupies residues T341–I361. The Cytoplasmic segment spans residues D362–E371. Residues I372–L392 form a helical membrane-spanning segment. Residue I393 is a topological domain, periplasmic. A helical transmembrane segment spans residues V394 to L414. The Cytoplasmic portion of the chain corresponds to Q415–G566. The 111-residue stretch at K436–A546 folds into the STAS domain.

It belongs to the SLC26A/SulP transporter (TC 2.A.53) family.

The protein resides in the cell inner membrane. Low/medium affinity, Na(+)-dependent bicarbonate transporter. In Picosynechococcus sp. (strain ATCC 27264 / PCC 7002 / PR-6) (Agmenellum quadruplicatum), this protein is Bicarbonate transporter BicA (bicA).